A 133-amino-acid chain; its full sequence is p53 and DNA damage-regulated protein 1 (133 aa).

This sequence belongs to the prefoldin subunit beta family. Component of the PAQosome complex which is responsible for the biogenesis of several protein complexes and which consists of R2TP complex members RUVBL1, RUVBL2, RPAP3 and PIH1D1, URI complex members PFDN2, PFDN6, PDRG1, UXT and URI1 as well as ASDURF, POLR2E and DNAAF10/WDR92.

It is found in the cytoplasm. In terms of biological role, may play a role in chaperone-mediated protein folding. The sequence is that of p53 and DNA damage-regulated protein 1 (PDRG1) from Pongo abelii (Sumatran orangutan).